Here is a 345-residue protein sequence, read N- to C-terminus: NADH-quinone oxidoreductase subunit H 1 (345 aa).

Helical transmembrane passes span 11–31, 50–70, 84–104, 115–135, 161–181, 187–207, 248–268, 277–297, and 309–329; these read IILT…ISLL, PNVV…KYIF, FFLA…VIPF, VAIL…IMGG, LGLI…SHIV, AFGL…LFFI, YIAI…GWLS, VFWM…VKAI, and IGWK…AFLA.

It belongs to the complex I subunit 1 family. As to quaternary structure, NDH-1 is composed of 14 different subunits. Subunits NuoA, H, J, K, L, M, N constitute the membrane sector of the complex.

Its subcellular location is the cell inner membrane. The enzyme catalyses a quinone + NADH + 5 H(+)(in) = a quinol + NAD(+) + 4 H(+)(out). Its function is as follows. NDH-1 shuttles electrons from NADH, via FMN and iron-sulfur (Fe-S) centers, to quinones in the respiratory chain. The immediate electron acceptor for the enzyme in this species is believed to be ubiquinone. Couples the redox reaction to proton translocation (for every two electrons transferred, four hydrogen ions are translocated across the cytoplasmic membrane), and thus conserves the redox energy in a proton gradient. This subunit may bind ubiquinone. The protein is NADH-quinone oxidoreductase subunit H 1 of Cereibacter sphaeroides (strain ATCC 17023 / DSM 158 / JCM 6121 / CCUG 31486 / LMG 2827 / NBRC 12203 / NCIMB 8253 / ATH 2.4.1.) (Rhodobacter sphaeroides).